We begin with the raw amino-acid sequence, 369 residues long: Tetraacyldisaccharide 4'-kinase (369 aa).

68-75 (VVGGTGKT) serves as a coordination point for ATP.

This sequence belongs to the LpxK family.

It catalyses the reaction a lipid A disaccharide + ATP = a lipid IVA + ADP + H(+). It functions in the pathway glycolipid biosynthesis; lipid IV(A) biosynthesis; lipid IV(A) from (3R)-3-hydroxytetradecanoyl-[acyl-carrier-protein] and UDP-N-acetyl-alpha-D-glucosamine: step 6/6. Functionally, transfers the gamma-phosphate of ATP to the 4'-position of a tetraacyldisaccharide 1-phosphate intermediate (termed DS-1-P) to form tetraacyldisaccharide 1,4'-bis-phosphate (lipid IVA). In Chlamydia muridarum (strain MoPn / Nigg), this protein is Tetraacyldisaccharide 4'-kinase.